We begin with the raw amino-acid sequence, 150 residues long: Endoribonuclease YbeY (150 aa).

Histidine 113, histidine 117, and histidine 123 together coordinate Zn(2+).

The protein belongs to the endoribonuclease YbeY family. It depends on Zn(2+) as a cofactor.

The protein resides in the cytoplasm. Single strand-specific metallo-endoribonuclease involved in late-stage 70S ribosome quality control and in maturation of the 3' terminus of the 16S rRNA. The chain is Endoribonuclease YbeY from Wolbachia sp. subsp. Drosophila simulans (strain wRi).